Consider the following 308-residue polypeptide: MPETGQEPPSAPPPPPPPKESFYIKNLLNGDPPKAAPKQPRALFAPSGKADGSGFALSQVGDLSFPRFEIPAPRFALSAHCLERAQTWWYPYALTPAGAHLPRTEAAEKSLLRDSSPASGTDRDSPEPLLQGGDAEQKERDPKSPAEIVLEESDSEEGKKEGGAEDWKKREESPEKKPCRKKKTRTVFSRSQVFQLESTFDMKRYLSSSERAGLAASLHLTETQVKIWFQNRRNKWKRQLAAELEAANLSHAAAQRIVRVPILYHENSGAESSAAGGGGPGPQPLLTFPHPVYYSHPSVTSVPLLRPV.

Disordered stretches follow at residues 1–57 (MPET…GFAL) and 107–184 (AEKS…KKKT). The segment covering 9 to 19 (PSAPPPPPPPK) has biased composition (pro residues). 2 stretches are compositionally biased toward basic and acidic residues: residues 135-144 (AEQKERDPKS) and 156-177 (EEGK…PEKK). The segment at residues 181–240 (KKKTRTVFSRSQVFQLESTFDMKRYLSSSERAGLAASLHLTETQVKIWFQNRRNKWKRQL) is a DNA-binding region (homeobox).

Belongs to the HMX homeobox family.

The protein localises to the nucleus. Functionally, transcription factor involved in specification of neuronal cell types and which is required for inner ear and hypothalamus development. Binds to the 5'-CAAGTG-3' core sequence. In Gallus gallus (Chicken), this protein is Homeobox protein HMX3 (HMX3).